We begin with the raw amino-acid sequence, 497 residues long: MKGVLSLSLLPLLAAPSPILVDTIHRDAAPILSSHNSKEVPDSYIVVFKKNVSPASAAAHQVWVQDLHTTVMAKRSLRKRNQFPFKNDAFDGLKHTYDIAGSIMGYSGHFDEEVIEQVRRHPDVQYIEKDSEVHAWDEPVTENNAPWGLARVSHRDSLTMGTFNKYLYAANGGEGVDVYVIDTGTNIEHVDFEGRAHWGKTIPTGDDDVDGNGHGTHCSGTVAGKKYGVAKKANVYAVKVLRSNGSGTMSDVVKGVEWAAGAHLSKMVEARKKGNKAFKGSAANMSLGGGKSFTLDLAVNAAVDAGIHFAVAAGNDNADACNYSPAAAEKAVTVGASTLADERAYFSNYGKCTDIFAPGLNILSTWIGSKYAVNTISGTSMASPHVAGLLAYFLSLQPEQDSAFAVSPISPAKLKKDMIAIATKNALTDIPADTPNILAWNGGGSSNYTAIIQQGGYEATRPGNKAAQLTEKIEKLGQNTASQLGAIYSEIKDAFTI.

A signal peptide spans Met-1 to Pro-16. Positions Ser-17–Trp-136 are excised as a propeptide. One can recognise an Inhibitor I9 domain in the interval Ser-43–His-134. Positions Pro-146–Ile-452 constitute a Peptidase S8 domain. Active-site charge relay system residues include Asp-182 and His-214. Asn-244 and Asn-284 each carry an N-linked (GlcNAc...) asparagine glycan. Ser-380 functions as the Charge relay system in the catalytic mechanism. Asn-447 carries an N-linked (GlcNAc...) asparagine glycan.

Belongs to the peptidase S8 family.

It localises to the secreted. In terms of biological role, secreted subtilisin-like serine protease with keratinolytic activity that contributes to pathogenicity. This chain is Subtilisin-like protease CPC735_031240, found in Coccidioides posadasii (strain C735) (Valley fever fungus).